We begin with the raw amino-acid sequence, 212 residues long: Adenine phosphoribosyltransferase (212 aa).

The protein belongs to the purine/pyrimidine phosphoribosyltransferase family. In terms of assembly, homodimer.

Its subcellular location is the cytoplasm. It carries out the reaction AMP + diphosphate = 5-phospho-alpha-D-ribose 1-diphosphate + adenine. The protein operates within purine metabolism; AMP biosynthesis via salvage pathway; AMP from adenine: step 1/1. Catalyzes a salvage reaction resulting in the formation of AMP, that is energically less costly than de novo synthesis. The sequence is that of Adenine phosphoribosyltransferase from Mycobacterium tuberculosis (strain ATCC 25618 / H37Rv).